A 441-amino-acid chain; its full sequence is Double-stranded RNA-binding protein 1 (441 aa).

DRBM domains follow at residues 1-71 (MYKS…HLSS), 86-155 (SYKS…SLPQ), and 169-237 (SYKN…HFED). Residues 69 to 88 (LSSLPLPPPPPPSENQSSYK) form a disordered region.

Its function is as follows. Binds double-stranded RNA. The sequence is that of Double-stranded RNA-binding protein 1 (DRB1) from Oryza sativa subsp. japonica (Rice).